The chain runs to 374 residues: GPN-loop GTPase 1 (374 aa).

Alanine 2 carries the N-acetylalanine modification. GTP is bound at residue 29 to 34 (GSGKTT). The Gly-Pro-Asn (GPN)-loop; involved in dimer interface motif lies at 86 to 88 (GPN). 189-192 (NKTD) serves as a coordination point for GTP. Residues serine 301, serine 312, and serine 314 each carry the phosphoserine modification. Positions 326–354 (RGTLDEEDEEADSDTDDIDHRVTEESHEE) are disordered. Residue threonine 328 is modified to Phosphothreonine. A compositionally biased stretch (acidic residues) spans 330–342 (DEEDEEADSDTDD). Serine 338 bears the Phosphoserine mark. The residue at position 340 (threonine 340) is a Phosphothreonine. Over residues 343 to 354 (IDHRVTEESHEE) the composition is skewed to basic and acidic residues.

It belongs to the GPN-loop GTPase family. In terms of assembly, heterodimer with GPN3. Binds to RNA polymerase II (RNAPII). Interacts directly with RNAPII subunits RPB4 and RPB7 and the CTD of RPB1. Interacts with XPA. As to expression, expressed ubiquitously.

It is found in the cytoplasm. The protein resides in the nucleus. Functionally, small GTPase required for proper nuclear import of RNA polymerase II (RNAPII). May act at an RNAP assembly step prior to nuclear import. Forms an interface between the RNA polymerase II enzyme and chaperone/scaffolding proteins, suggesting that it is required to connect RNA polymerase II to regulators of protein complex formation. May be involved in nuclear localization of XPA. This is GPN-loop GTPase 1 from Homo sapiens (Human).